The primary structure comprises 218 residues: Small ribosomal subunit protein uS3c (218 aa).

Residues 47–118 (VQKNIRISSG…KLNIAITRIS (72 aa)) form the KH type-2 domain.

This sequence belongs to the universal ribosomal protein uS3 family. In terms of assembly, part of the 30S ribosomal subunit.

The protein localises to the plastid. It is found in the chloroplast. The chain is Small ribosomal subunit protein uS3c (rps3) from Arabis hirsuta (Hairy rock-cress).